The chain runs to 1030 residues: MEGPPTAAHAAAPLRTAVFLALAASWQQPAVAVGNWNCARSTDDKQWECVAKRKDGGADTPAAPGPKAPPTALGEAALSQSNRAAPSTAVSPPTGAAPVAGTGLRPPPPVPSAASPSPSTMAGGPTEDEEDEESESAESEKAESTAAPQVAEGGSAGEPGGTPPARAPRPETPLAASRFVPSGTVSVRKEAASPQSVAAHAPGAPAGWTCKPQKESRSWDCNLVGPDPRGVARPVGAAGEPPEDWAQAATITEYDEQRFDRLLGMMPSNPWAGTCARGKRESDAAKDFLLTSKDRLARKRAPVEVHGNYGEMDDQEVATFTGDAEVTRYDQHVKGDFLSLNTEADTVNARGSVFYREKGLAFASDTAFMRMEEDKGVLRNSQFIVETMPSRGVARVAHMDSDTHSHYETATYTTCPPGNTDWMLHADEVTIDKETGRGDASHAWMEFKGVPIFYTPYMDFPVDDRRQSGFLSPTFGQSKVNGFNLSVPYYFNLAPDYDLTLQAREMTSRGPLFGGDFRWLTEHQRIRLLGEVIPEDSQTKTTRGQAGFDAMGRWTDSLFTLVDLNYVSDSKYLNQLNNTLGLVSNTFVQSQAYADYTYSNGSVRLLGDYYQNIDPSIPTEQTPYYRLPSLRGNYNEQIGDSGFRFQANAEVVNFGHGGNNVKGQRLNIRPQISYPIQSPGSFLVPSVALQNTTYMLQNQAAGTGSSLNRVAPIFSVDSGLVFDRDFELGSASLRQTLEPRVFYTYVPKINQNDYPIFDSNYYDFTYYQLFRTNRFAGADRLADMNQVTLGLTSRFIDRDTGWERLTASLGKVFFITDPSVTLVNPYGANPLGVVLGPDQGQFVYGNYNKSYANVIGKVDTRLTEAFFLGGEAQLSPYTGRFERGSVGLQYNDRQNNLMNLSYRYREPLPNQPAIEQAATIGQNTTALNNTDISFRIPFLKDWHVIGRWQYSLLYNRTLESLVGLEHETCCWRFTVLGREYLNGVNQSNAPTTNTAIFVQMELKGLTRLGDQVDRFLYRAINGYRMPNEDF.

A signal peptide spans 1–32; that stretch reads MEGPPTAAHAAAPLRTAVFLALAASWQQPAVA. A disordered region spans residues 50 to 213; the sequence is VAKRKDGGAD…APAGWTCKPQ (164 aa). Positions 78 to 91 are enriched in polar residues; sequence LSQSNRAAPSTAVS. Over residues 126-137 the composition is skewed to acidic residues; that stretch reads TEDEEDEESESA. The span at 161 to 171 shows a compositional bias: pro residues; the sequence is GTPPARAPRPE.

This sequence belongs to the LptD family. Component of the lipopolysaccharide transport and assembly complex. Interacts with LptE and LptA.

It localises to the cell outer membrane. Functionally, together with LptE, is involved in the assembly of lipopolysaccharide (LPS) at the surface of the outer membrane. This Methylococcus capsulatus (strain ATCC 33009 / NCIMB 11132 / Bath) protein is LPS-assembly protein LptD.